An 80-amino-acid chain; its full sequence is uncharacterized protein (80 aa).

This is an uncharacterized protein from Bacillus subtilis (strain 168).